Here is a 1909-residue protein sequence, read N- to C-terminus: DENN domain-containing protein 4C (1909 aa).

The MABP domain maps to 40–199 (KAPITDIAII…SVFLCYKKSV (160 aa)). A uDENN domain is found at 191 to 364 (VFLCYKKSVP…NIPFPSPQRP (174 aa)). The 137-residue stretch at 385-521 (PLPLSGANFS…PCKNLLSTLK (137 aa)) folds into the cDENN domain. Residues 523-641 (LYPQLSSVHQ…CSFVSDKDTG (119 aa)) form the dDENN domain. Phosphoserine is present on residues Ser-703, Ser-737, and Ser-741. The stretch at 821-855 (VCYRVVMQLCGLWGHPVLAVRVLFEMKTARIKPNA) is one PPR repeat. Phosphoserine is present on residues Glu-953, Ser-965, Ser-968, and Ser-973. Phosphothreonine is present on Thr-975. 12 positions are modified to phosphoserine: Ser-989, Ser-996, Ser-1003, Ser-1046, Ser-1061, Ser-1099, Ser-1126, Ser-1184, Ser-1225, Ser-1244, Ser-1252, and Ser-1278. Disordered regions lie at residues 1243 to 1263 (KSPLGSKSSSMELHREENRES) and 1277 to 1338 (SSLP…HGSL). Over residues 1296–1316 (SSPAVSRSKTFTGRFKQQTPS) the composition is skewed to polar residues. Ser-1325, Ser-1337, and Ser-1346 each carry phosphoserine. The interval 1419-1474 (SGLVPSELTQSNTSLGSSSSSGDVGKLHYPTGEVPFPRGMKGQDFEKSDHGSSQNT) is disordered. Over residues 1426-1440 (LTQSNTSLGSSSSSG) the composition is skewed to low complexity. The span at 1459–1468 (KGQDFEKSDH) shows a compositional bias: basic and acidic residues. Phosphoserine occurs at positions 1623, 1627, 1629, 1640, and 1799.

Phosphorylated in response to insulin.

Its subcellular location is the cytoplasmic vesicle membrane. The protein resides in the cell membrane. It is found in the cytoplasm. The protein localises to the cytosol. Functionally, guanine nucleotide exchange factor (GEF) activating RAB10. Promotes the exchange of GDP to GTP, converting inactive GDP-bound RAB10 into its active GTP-bound form. Thereby, stimulates SLC2A4/GLUT4 glucose transporter-enriched vesicles delivery to the plasma membrane in response to insulin. The chain is DENN domain-containing protein 4C (DENND4C) from Homo sapiens (Human).